Consider the following 512-residue polypeptide: Lysine--tRNA ligase (512 aa).

Mg(2+)-binding residues include glutamate 408 and glutamate 415.

It belongs to the class-II aminoacyl-tRNA synthetase family. As to quaternary structure, homodimer. Mg(2+) is required as a cofactor.

The protein localises to the cytoplasm. The catalysed reaction is tRNA(Lys) + L-lysine + ATP = L-lysyl-tRNA(Lys) + AMP + diphosphate. This is Lysine--tRNA ligase from Prochlorococcus marinus (strain MIT 9515).